Here is a 217-residue protein sequence, read N- to C-terminus: Probable transaldolase (217 aa).

Lysine 83 serves as the catalytic Schiff-base intermediate with substrate.

Belongs to the transaldolase family. Type 3B subfamily.

It localises to the cytoplasm. It carries out the reaction D-sedoheptulose 7-phosphate + D-glyceraldehyde 3-phosphate = D-erythrose 4-phosphate + beta-D-fructose 6-phosphate. It participates in carbohydrate degradation; pentose phosphate pathway; D-glyceraldehyde 3-phosphate and beta-D-fructose 6-phosphate from D-ribose 5-phosphate and D-xylulose 5-phosphate (non-oxidative stage): step 2/3. Functionally, transaldolase is important for the balance of metabolites in the pentose-phosphate pathway. In Rhizobium meliloti (strain 1021) (Ensifer meliloti), this protein is Probable transaldolase.